A 187-amino-acid chain; its full sequence is Accessory gene regulator protein B (187 aa).

5 consecutive transmembrane segments (helical) span residues 49–69, 82–102, 106–126, 144–164, and 166–186; these read ISIFLSVFLYTLVTHLSYMLI, ILCYIQSILIFVFVPYFLINI, FTYLLALSIIGLISVVIYAPA, VSIIMYLLVMILSLIIHPFYA, and FMLLGILVESITLLPIFFPKE.

Belongs to the AgrB family.

It is found in the cell membrane. Functionally, essential for the production of a quorum sensing system signal molecule, the autoinducing peptide (AIP). This quorum sensing system is responsible for the regulation of the expression of virulence factor genes. Involved in the proteolytic processing of AgrD, the precursor of AIP. The polypeptide is Accessory gene regulator protein B (Staphylococcus aureus (strain bovine RF122 / ET3-1)).